Reading from the N-terminus, the 278-residue chain is MNVWQAAVLGIVQGTTEFLPISSSAHLIVLPWLFDWPEPGLAFNVALHLGTLSAVLAYFWRDLIQIGRAWFAGLIRLRPLEDSASRLGWAVIIGSLPAGLAGFFLNDVIDHFFHSGGGGDTAIVFTSLLLIVLGFVLWLAERYGTRWRSLGELGLRDGLVVGLAQALALLPGVSRSGSTITASLFLGFARPAAARFSFILGIPAIAGAGLLETLKLVETGLPAEQRVLFVTGVASAAITGFLAIAFLLRFLQRYSTSIFIVYRIALGLVLLLVVSFAR.

8 helical membrane passes run 14 to 34 (GTTEFLPISSSAHLIVLPWLF), 40 to 60 (GLAFNVALHLGTLSAVLAYFW), 89 to 109 (WAVIIGSLPAGLAGFFLNDVI), 121 to 141 (TAIVFTSLLLIVLGFVLWLAE), 153 to 173 (LGLRDGLVVGLAQALALLPGV), 196 to 216 (FSFILGIPAIAGAGLLETLKL), 227 to 247 (VLFVTGVASAAITGFLAIAFL), and 257 to 277 (SIFIVYRIALGLVLLLVVSFA).

It belongs to the UppP family.

Its subcellular location is the cell membrane. The catalysed reaction is di-trans,octa-cis-undecaprenyl diphosphate + H2O = di-trans,octa-cis-undecaprenyl phosphate + phosphate + H(+). Its function is as follows. Catalyzes the dephosphorylation of undecaprenyl diphosphate (UPP). Confers resistance to bacitracin. The polypeptide is Undecaprenyl-diphosphatase (Thermomicrobium roseum (strain ATCC 27502 / DSM 5159 / P-2)).